An 81-amino-acid polypeptide reads, in one-letter code: Photosystem I iron-sulfur center (81 aa).

2 4Fe-4S ferredoxin-type domains span residues 2-31 (SHSV…MIPW) and 39-68 (IASA…VRVY). [4Fe-4S] cluster is bound by residues cysteine 11, cysteine 14, cysteine 17, cysteine 21, cysteine 48, cysteine 51, cysteine 54, and cysteine 58.

The eukaryotic PSI reaction center is composed of at least 11 subunits. [4Fe-4S] cluster serves as cofactor.

Its subcellular location is the plastid thylakoid membrane. It carries out the reaction reduced [plastocyanin] + hnu + oxidized [2Fe-2S]-[ferredoxin] = oxidized [plastocyanin] + reduced [2Fe-2S]-[ferredoxin]. In terms of biological role, apoprotein for the two 4Fe-4S centers FA and FB of photosystem I (PSI); essential for photochemical activity. FB is the terminal electron acceptor of PSI, donating electrons to ferredoxin. The C-terminus interacts with PsaA/B/D and helps assemble the protein into the PSI complex. Required for binding of PsaD and PsaE to PSI. PSI is a plastocyanin-ferredoxin oxidoreductase, converting photonic excitation into a charge separation, which transfers an electron from the donor P700 chlorophyll pair to the spectroscopically characterized acceptors A0, A1, FX, FA and FB in turn. The protein is Photosystem I iron-sulfur center of Cuscuta gronovii (Common dodder).